We begin with the raw amino-acid sequence, 66 residues long: Large ribosomal subunit protein uL30 (66 aa).

This sequence belongs to the universal ribosomal protein uL30 family. Part of the 50S ribosomal subunit.

This chain is Large ribosomal subunit protein uL30, found in Azorhizobium caulinodans (strain ATCC 43989 / DSM 5975 / JCM 20966 / LMG 6465 / NBRC 14845 / NCIMB 13405 / ORS 571).